The chain runs to 470 residues: ATP synthase subunit beta (470 aa).

Residue 155–162 (GGAGVGKT) coordinates ATP.

It belongs to the ATPase alpha/beta chains family. As to quaternary structure, F-type ATPases have 2 components, CF(1) - the catalytic core - and CF(0) - the membrane proton channel. CF(1) has five subunits: alpha(3), beta(3), gamma(1), delta(1), epsilon(1). CF(0) has three main subunits: a(1), b(2) and c(9-12). The alpha and beta chains form an alternating ring which encloses part of the gamma chain. CF(1) is attached to CF(0) by a central stalk formed by the gamma and epsilon chains, while a peripheral stalk is formed by the delta and b chains.

It is found in the cell membrane. The enzyme catalyses ATP + H2O + 4 H(+)(in) = ADP + phosphate + 5 H(+)(out). Functionally, produces ATP from ADP in the presence of a proton gradient across the membrane. The catalytic sites are hosted primarily by the beta subunits. The polypeptide is ATP synthase subunit beta (Lacticaseibacillus casei (Lactobacillus casei)).